Here is a 910-residue protein sequence, read N- to C-terminus: Constitutive coactivator of peroxisome proliferator-activated receptor gamma (910 aa).

Disordered stretches follow at residues 333–416, 443–483, and 863–910; these read SDAE…VPMC, SEPR…ESRQ, and SHHA…WRRY. 3 stretches are compositionally biased toward basic and acidic residues: residues 335-351, 360-375, and 396-411; these read AESR…ESRQ and ESRR…EPRQ. Over residues 872–890 the composition is skewed to polar residues; the sequence is QGSSYHRTGSGYSRSSQGQ. R885 carries the post-translational modification Omega-N-methylarginine. The span at 901-910 shows a compositional bias: basic and acidic residues; the sequence is QYEHDQWRRY.

This sequence belongs to the constitutive coactivator of PPAR-gamma family. Interacts with ESR1 and RXRA. Interacts with PPARG; in a ligand-independent manner. As to expression, widely expressed.

It localises to the nucleus. Its function is as follows. Functions as a transactivator of PPARG and ESR1. Functions in adipogenesis through PPARG activation. This Homo sapiens (Human) protein is Constitutive coactivator of peroxisome proliferator-activated receptor gamma (FAM120B).